The primary structure comprises 437 residues: ATP-dependent protease ATPase subunit HslU (437 aa).

ATP is bound by residues V18, G60–E65, D249, E315, and R387.

This sequence belongs to the ClpX chaperone family. HslU subfamily. In terms of assembly, a double ring-shaped homohexamer of HslV is capped on each side by a ring-shaped HslU homohexamer. The assembly of the HslU/HslV complex is dependent on binding of ATP.

The protein resides in the cytoplasm. Its function is as follows. ATPase subunit of a proteasome-like degradation complex; this subunit has chaperone activity. The binding of ATP and its subsequent hydrolysis by HslU are essential for unfolding of protein substrates subsequently hydrolyzed by HslV. HslU recognizes the N-terminal part of its protein substrates and unfolds these before they are guided to HslV for hydrolysis. In Rhodospirillum centenum (strain ATCC 51521 / SW), this protein is ATP-dependent protease ATPase subunit HslU.